The sequence spans 545 residues: Glucose-6-phosphate isomerase (545 aa).

Glutamate 351 functions as the Proton donor in the catalytic mechanism. Catalysis depends on residues histidine 382 and lysine 510.

Belongs to the GPI family.

It is found in the cytoplasm. The enzyme catalyses alpha-D-glucose 6-phosphate = beta-D-fructose 6-phosphate. It participates in carbohydrate biosynthesis; gluconeogenesis. It functions in the pathway carbohydrate degradation; glycolysis; D-glyceraldehyde 3-phosphate and glycerone phosphate from D-glucose: step 2/4. Its function is as follows. Catalyzes the reversible isomerization of glucose-6-phosphate to fructose-6-phosphate. The chain is Glucose-6-phosphate isomerase from Shewanella sp. (strain MR-4).